The following is a 743-amino-acid chain: Phosphoribosylformylglycinamidine synthase subunit PurL (743 aa).

The active site involves His-50. The ATP site is built by Tyr-53 and Lys-92. Residue Glu-94 coordinates Mg(2+). Residues 95-98 and Arg-117 each bind substrate; that span reads SHNH. Catalysis depends on His-96, which acts as the Proton acceptor. Residue Asp-118 coordinates Mg(2+). Gln-241 contributes to the substrate binding site. Asp-269 contacts Mg(2+). Residue 313–315 participates in substrate binding; sequence ESQ. Positions 494 and 531 each coordinate ATP. Asn-532 lines the Mg(2+) pocket. Ser-534 provides a ligand contact to substrate.

It belongs to the FGAMS family. Monomer. Part of the FGAM synthase complex composed of 1 PurL, 1 PurQ and 2 PurS subunits.

The protein resides in the cytoplasm. It catalyses the reaction N(2)-formyl-N(1)-(5-phospho-beta-D-ribosyl)glycinamide + L-glutamine + ATP + H2O = 2-formamido-N(1)-(5-O-phospho-beta-D-ribosyl)acetamidine + L-glutamate + ADP + phosphate + H(+). Its pathway is purine metabolism; IMP biosynthesis via de novo pathway; 5-amino-1-(5-phospho-D-ribosyl)imidazole from N(2)-formyl-N(1)-(5-phospho-D-ribosyl)glycinamide: step 1/2. Functionally, part of the phosphoribosylformylglycinamidine synthase complex involved in the purines biosynthetic pathway. Catalyzes the ATP-dependent conversion of formylglycinamide ribonucleotide (FGAR) and glutamine to yield formylglycinamidine ribonucleotide (FGAM) and glutamate. The FGAM synthase complex is composed of three subunits. PurQ produces an ammonia molecule by converting glutamine to glutamate. PurL transfers the ammonia molecule to FGAR to form FGAM in an ATP-dependent manner. PurS interacts with PurQ and PurL and is thought to assist in the transfer of the ammonia molecule from PurQ to PurL. This Sinorhizobium medicae (strain WSM419) (Ensifer medicae) protein is Phosphoribosylformylglycinamidine synthase subunit PurL.